A 202-amino-acid chain; its full sequence is ATP-dependent Clp protease proteolytic subunit (202 aa).

The Nucleophile role is filled by Ser107. The active site involves His132.

It belongs to the peptidase S14 family. In terms of assembly, fourteen ClpP subunits assemble into 2 heptameric rings which stack back to back to give a disk-like structure with a central cavity, resembling the structure of eukaryotic proteasomes.

It localises to the cytoplasm. The enzyme catalyses Hydrolysis of proteins to small peptides in the presence of ATP and magnesium. alpha-casein is the usual test substrate. In the absence of ATP, only oligopeptides shorter than five residues are hydrolyzed (such as succinyl-Leu-Tyr-|-NHMec, and Leu-Tyr-Leu-|-Tyr-Trp, in which cleavage of the -Tyr-|-Leu- and -Tyr-|-Trp bonds also occurs).. Cleaves peptides in various proteins in a process that requires ATP hydrolysis. Has a chymotrypsin-like activity. Plays a major role in the degradation of misfolded proteins. This is ATP-dependent Clp protease proteolytic subunit from Shewanella amazonensis (strain ATCC BAA-1098 / SB2B).